We begin with the raw amino-acid sequence, 61 residues long: Large ribosomal subunit protein uL30 (61 aa).

It belongs to the universal ribosomal protein uL30 family. Part of the 50S ribosomal subunit.

This Mycobacterium sp. (strain KMS) protein is Large ribosomal subunit protein uL30.